The chain runs to 249 residues: Isoprenyl transferase (249 aa).

The active site involves aspartate 25. Aspartate 25 contributes to the Mg(2+) binding site. Substrate is bound by residues 26-29 (GNGR), tryptophan 30, arginine 38, histidine 42, and 70-72 (STE). Asparagine 73 (proton acceptor) is an active-site residue. Substrate-binding positions include tryptophan 74, arginine 76, arginine 197, and 203–205 (RLS). Glutamate 216 is a binding site for Mg(2+).

The protein belongs to the UPP synthase family. Homodimer. It depends on Mg(2+) as a cofactor.

In terms of biological role, catalyzes the condensation of isopentenyl diphosphate (IPP) with allylic pyrophosphates generating different type of terpenoids. In Streptococcus thermophilus (strain CNRZ 1066), this protein is Isoprenyl transferase.